Reading from the N-terminus, the 1883-residue chain is Endoribonuclease Dicer homolog 1 (1883 aa).

Disordered regions lie at residues alanine 71–proline 97, alanine 129–arginine 188, and arginine 221–valine 262. Positions proline 75–leucine 96 are enriched in pro residues. Composition is skewed to basic and acidic residues over residues alanine 129–histidine 138 and glutamate 228–valine 262. In terms of domain architecture, Helicase ATP-binding spans valine 274–asparagine 413. An ATP-binding site is contributed by leucine 287–threonine 294. The DECH box signature appears at aspartate 358 to histidine 361. The disordered stretch occupies residues lysine 577–serine 604. The 161-residue stretch at leucine 629–threonine 789 folds into the Helicase C-terminal domain. The Dicer dsRNA-binding fold domain occupies alanine 817–glutamate 912. The disordered stretch occupies residues threonine 901 to arginine 928. Over residues glycine 907 to glutamine 916 the composition is skewed to basic and acidic residues. Positions histidine 1163–proline 1296 constitute a PAZ domain. RNase III domains follow at residues leucine 1320–glycine 1498 and phenylalanine 1538–glycine 1686. Mg(2+) contacts are provided by glutamate 1576, aspartate 1672, and glutamate 1675. 2 consecutive DRBM domains span residues histidine 1712–glutamate 1775 and phenylalanine 1797–arginine 1872.

It belongs to the helicase family. Dicer subfamily. May interact with ARGONAUTE1 or PINHEAD through their common PAZ domains. It depends on Mg(2+) as a cofactor. Mn(2+) is required as a cofactor.

The protein resides in the nucleus. Its function is as follows. Involved in the RNA silencing pathway. Cleaves double-stranded RNA to produce microRNAs (miRNAs) of 21-24 nucleotides which target the selective destruction of complementary RNAs. Regulates by this way the development of the plant. May not be involved in small interfering RNAs (siRNAs) production. The sequence is that of Endoribonuclease Dicer homolog 1 (DCL1) from Oryza sativa subsp. japonica (Rice).